The primary structure comprises 157 residues: Ribonuclease H (157 aa).

Residues 1–146 (MPELFAYTDG…ADALAREGMA (146 aa)) enclose the RNase H type-1 domain. Residues aspartate 9, glutamate 52, aspartate 74, and aspartate 138 each coordinate Mg(2+).

This sequence belongs to the RNase H family. In terms of assembly, monomer. Mg(2+) is required as a cofactor.

The protein resides in the cytoplasm. It catalyses the reaction Endonucleolytic cleavage to 5'-phosphomonoester.. Endonuclease that specifically degrades the RNA of RNA-DNA hybrids. This chain is Ribonuclease H, found in Dinoroseobacter shibae (strain DSM 16493 / NCIMB 14021 / DFL 12).